We begin with the raw amino-acid sequence, 309 residues long: Malate dehydrogenase (309 aa).

Residues 9–14 (GAGFVG) and Asp-33 each bind NAD(+). Positions 82 and 88 each coordinate substrate. Residues Asn-95 and 118 to 120 (VNN) contribute to the NAD(+) site. Asn-120 and Arg-151 together coordinate substrate. His-175 acts as the Proton acceptor in catalysis.

Belongs to the LDH/MDH superfamily. MDH type 3 family. In terms of assembly, homotetramer (active enzyme); homodimer and homotrimer at temperatures lower than 55 degrees Celsius (inactive forms).

It carries out the reaction (S)-malate + NAD(+) = oxaloacetate + NADH + H(+). In terms of biological role, catalyzes the reversible oxidation of malate to oxaloacetate. This is Malate dehydrogenase from Chloroflexus aurantiacus (strain ATCC 29366 / DSM 635 / J-10-fl).